Reading from the N-terminus, the 716-residue chain is Amino-acid acetyltransferase, mitochondrial (716 aa).

The N-terminal 44 residues, 1-44, are a transit peptide targeting the mitochondrion; the sequence is MSPHTGWPRTVNSSLLKKHRSSLCTCQHTSSFLPRSFSTTADRH. Disordered stretches follow at residues 99–119 and 487–508; these read YPKSPDENKPEPEKLATAPTL and LSSSLPMSRRGPTNNGQGTVYP. Residues 102 to 112 are compositionally biased toward basic and acidic residues; that stretch reads SPDENKPEPEK. The span at 497–508 shows a compositional bias: polar residues; the sequence is GPTNNGQGTVYP. The region spanning 537 to 706 is the N-acetyltransferase domain; sequence SRPRLKLDDP…YEAVCRSTQP (170 aa).

Belongs to the acetyltransferase family.

It localises to the mitochondrion. It catalyses the reaction L-glutamate + acetyl-CoA = N-acetyl-L-glutamate + CoA + H(+). It participates in amino-acid biosynthesis; L-arginine biosynthesis; N(2)-acetyl-L-ornithine from L-glutamate: step 1/4. Its function is as follows. N-acetylglutamate synthase involved in arginine biosynthesis. The chain is Amino-acid acetyltransferase, mitochondrial (arg2) from Neosartorya fischeri (strain ATCC 1020 / DSM 3700 / CBS 544.65 / FGSC A1164 / JCM 1740 / NRRL 181 / WB 181) (Aspergillus fischerianus).